A 77-amino-acid polypeptide reads, in one-letter code: Acyl carrier protein (77 aa).

Residues 1–76 (MAVFDEVKDV…DVVNYIDGLK (76 aa)) enclose the Carrier domain. O-(pantetheine 4'-phosphoryl)serine is present on S36.

This sequence belongs to the acyl carrier protein (ACP) family. 4'-phosphopantetheine is transferred from CoA to a specific serine of apo-ACP by AcpS. This modification is essential for activity because fatty acids are bound in thioester linkage to the sulfhydryl of the prosthetic group.

It is found in the cytoplasm. Its pathway is lipid metabolism; fatty acid biosynthesis. Its function is as follows. Carrier of the growing fatty acid chain in fatty acid biosynthesis. The polypeptide is Acyl carrier protein (Campylobacter fetus subsp. fetus (strain 82-40)).